The sequence spans 115 residues: Ribonuclease P protein component (115 aa).

It belongs to the RnpA family. As to quaternary structure, consists of a catalytic RNA component (M1 or rnpB) and a protein subunit.

It catalyses the reaction Endonucleolytic cleavage of RNA, removing 5'-extranucleotides from tRNA precursor.. Functionally, RNaseP catalyzes the removal of the 5'-leader sequence from pre-tRNA to produce the mature 5'-terminus. It can also cleave other RNA substrates such as 4.5S RNA. The protein component plays an auxiliary but essential role in vivo by binding to the 5'-leader sequence and broadening the substrate specificity of the ribozyme. In Bacillus cereus (strain Q1), this protein is Ribonuclease P protein component.